The sequence spans 323 residues: Beta-ketoacyl-[acyl-carrier-protein] synthase III (323 aa).

Catalysis depends on residues C114 and H250. The segment at 251–255 (QANIR) is ACP-binding. The active site involves N280.

Belongs to the thiolase-like superfamily. FabH family. As to quaternary structure, homodimer.

Its subcellular location is the cytoplasm. The catalysed reaction is malonyl-[ACP] + acetyl-CoA + H(+) = 3-oxobutanoyl-[ACP] + CO2 + CoA. It participates in lipid metabolism; fatty acid biosynthesis. In terms of biological role, catalyzes the condensation reaction of fatty acid synthesis by the addition to an acyl acceptor of two carbons from malonyl-ACP. Catalyzes the first condensation reaction which initiates fatty acid synthesis and may therefore play a role in governing the total rate of fatty acid production. Possesses both acetoacetyl-ACP synthase and acetyl transacylase activities. Its substrate specificity determines the biosynthesis of branched-chain and/or straight-chain of fatty acids. In Roseobacter denitrificans (strain ATCC 33942 / OCh 114) (Erythrobacter sp. (strain OCh 114)), this protein is Beta-ketoacyl-[acyl-carrier-protein] synthase III.